Consider the following 203-residue polypeptide: Small ribosomal subunit protein uS5 (203 aa).

Over residues 1–18 (MENNVKKETIVDSEKVEK) the composition is skewed to basic and acidic residues. The disordered stretch occupies residues 1–36 (MENNVKKETIVDSEKVEKQQPVTAPVVNKKENTQPK). The 64-residue stretch at 49–112 (FEERVVKIKR…KNANNNLIKV (64 aa)) folds into the S5 DRBM domain.

This sequence belongs to the universal ribosomal protein uS5 family. As to quaternary structure, part of the 30S ribosomal subunit. Contacts proteins S4 and S8.

In terms of biological role, with S4 and S12 plays an important role in translational accuracy. Functionally, located at the back of the 30S subunit body where it stabilizes the conformation of the head with respect to the body. This is Small ribosomal subunit protein uS5 from Ureaplasma urealyticum serovar 10 (strain ATCC 33699 / Western).